Reading from the N-terminus, the 1020-residue chain is Neurofilament heavy polypeptide (1020 aa).

Residues 1–100 (MMSFGGADAL…VATSRSEKEQ (100 aa)) are head. Residues 58 to 83 (VSASPSRFRGAGAASSTDSLDTLSNG) form a disordered region. A compositionally biased stretch (polar residues) spans 71 to 82 (ASSTDSLDTLSN). 2 positions are modified to phosphoserine: serine 76 and serine 124. The 317-residue stretch at 97-413 (EKEQLQALND…KLLEGEECRI (317 aa)) folds into the IF rod domain. The tract at residues 101 to 132 (LQALNDRFAGYIDKVRQLEAHNRSLEGEAAAL) is coil 1A. The segment at 133–145 (RQQQAGRSAMGEL) is linker 1. The coil 1B stretch occupies residues 146-244 (YEREVREMRG…QEEVGELLGQ (99 aa)). The interval 245 to 266 (IQGSGAAQAQMQAETRDALKCD) is linker 12. A coil 2A region spans residues 267–288 (VTSALREIRAQLEGHAVQSTLQ). A linker 2 region spans residues 289–292 (SEEW). Residues 293-413 (FRVRLDRLSE…KLLEGEECRI (121 aa)) form a coil 2B region. Residues serine 347 and serine 421 each carry the phosphoserine modification. Residues 414–1020 (GFGPIPFSLP…ATEDKAAKGK (607 aa)) are tail. Positions 456–1020 (IVEEQTEETQ…ATEDKAAKGK (565 aa)) are disordered. Acidic residues-rich tracts occupy residues 459-475 (EQTE…EEEE) and 483-498 (GKEE…EGGE). Phosphoserine is present on residues serine 511, serine 526, serine 532, serine 540, serine 546, serine 552, serine 560, serine 566, serine 574, serine 580, serine 586, serine 594, serine 600, serine 606, serine 614, serine 620, serine 628, serine 634, serine 640, serine 648, serine 654, serine 662, serine 668, serine 676, serine 682, serine 690, serine 696, and serine 704. Over residues 511–1020 (SPEKEAKSPV…ATEDKAAKGK (510 aa)) the composition is skewed to basic and acidic residues. A run of 4 repeats spans residues 525–530 (KSPAEA), 531–536 (KSPEKE), 539–544 (KSPAEV), and 545–550 (KSPEKA). A 30 X 6 AA repeats of K-S-P-[AEPV]-[EAK]-[AEVK] region spans residues 525–826 (KSPAEAKSPE…KEEVKSPVKE (302 aa)). Residues 559–564 (KSPPEA) form repeat 5. Tandem repeats lie at residues 573–578 (KSPAEV) and 579–584 (KSPEKA). 2 repeat units span residues 593–598 (KSPAEA) and 599–604 (KSPEKA). Residues 613–618 (KSPAEA) form repeat 10. 4 repeat units span residues 627–632 (KSPAEV), 633–638 (KSPEKA), 639–644 (KSPTKE), and 647–652 (KSPEKA). 12 tandem repeats follow at residues 661–666 (KSPEKA), 667–672 (KSPVKA), 675–680 (KSPEKA), 681–686 (KSPVKA), 689–694 (KSPEKA), 695–700 (KSPVKE), 703–708 (KSPEKA), 709–714 (KSPVKE), 717–722 (KSPEKA), 723–728 (KSPVKE), 737–742 (KSPVKE), and 745–750 (KSPEKA). Phosphoserine is present on residues serine 718, serine 724, and serine 738. Residues serine 752 and serine 763 each carry the phosphoserine modification. Copy 27 of the repeat occupies 762 to 767 (KSPEAK). Threonine 768 bears the Phosphothreonine mark. 3 repeat units span residues 786–791 (KSPVKE), 794–799 (KSPEKA), and 821–826 (KSPVKE). Serine 787, serine 795, serine 822, and serine 888 each carry phosphoserine.

Belongs to the intermediate filament family. As to quaternary structure, forms heterodimers with NEFL; which can further hetero-oligomerize (in vitro). Forms heterodimers with INA (in vitro). There are a number of repeats of the tripeptide K-S-P, NFH is phosphorylated on a number of the serines in this motif. It is thought that phosphorylation of NFH results in the formation of interfilament cross bridges that are important in the maintenance of axonal caliber. Post-translationally, phosphorylation seems to play a major role in the functioning of the larger neurofilament polypeptides (NF-M and NF-H), the levels of phosphorylation being altered developmentally and coincidentally with a change in the neurofilament function. In terms of processing, phosphorylated in the head and rod regions by the PKC kinase PKN1, leading to the inhibition of polymerization.

It localises to the cytoplasm. The protein resides in the cytoskeleton. Its subcellular location is the cell projection. The protein localises to the axon. Neurofilaments usually contain three intermediate filament proteins: NEFL, NEFM, and NEFH which are involved in the maintenance of neuronal caliber. NEFH has an important function in mature axons that is not subserved by the two smaller NF proteins. May additionally cooperate with the neuronal intermediate filament proteins PRPH and INA to form neuronal filamentous networks. The sequence is that of Neurofilament heavy polypeptide (NEFH) from Homo sapiens (Human).